The chain runs to 617 residues: 1-deoxy-D-xylulose-5-phosphate synthase (617 aa).

Thiamine diphosphate contacts are provided by residues His76 and 117–119; that span reads GHS. Asp148 is a Mg(2+) binding site. Thiamine diphosphate is bound by residues 149 to 150, Asn177, Tyr285, and Glu366; that span reads GA. A Mg(2+)-binding site is contributed by Asn177.

It belongs to the transketolase family. DXPS subfamily. Homodimer. Mg(2+) is required as a cofactor. Thiamine diphosphate serves as cofactor.

The enzyme catalyses D-glyceraldehyde 3-phosphate + pyruvate + H(+) = 1-deoxy-D-xylulose 5-phosphate + CO2. Its pathway is metabolic intermediate biosynthesis; 1-deoxy-D-xylulose 5-phosphate biosynthesis; 1-deoxy-D-xylulose 5-phosphate from D-glyceraldehyde 3-phosphate and pyruvate: step 1/1. Functionally, catalyzes the acyloin condensation reaction between C atoms 2 and 3 of pyruvate and glyceraldehyde 3-phosphate to yield 1-deoxy-D-xylulose-5-phosphate (DXP). The sequence is that of 1-deoxy-D-xylulose-5-phosphate synthase from Histophilus somni (strain 2336) (Haemophilus somnus).